We begin with the raw amino-acid sequence, 354 residues long: tRNA N6-adenosine threonylcarbamoyltransferase (354 aa).

His-111 and His-115 together coordinate Fe cation. Substrate-binding positions include 134–138, Asp-167, Gly-180, and Asn-279; that span reads LVSGG. A Fe cation-binding site is contributed by Asp-319.

This sequence belongs to the KAE1 / TsaD family. Fe(2+) serves as cofactor.

It localises to the cytoplasm. It carries out the reaction L-threonylcarbamoyladenylate + adenosine(37) in tRNA = N(6)-L-threonylcarbamoyladenosine(37) in tRNA + AMP + H(+). Its function is as follows. Required for the formation of a threonylcarbamoyl group on adenosine at position 37 (t(6)A37) in tRNAs that read codons beginning with adenine. Is involved in the transfer of the threonylcarbamoyl moiety of threonylcarbamoyl-AMP (TC-AMP) to the N6 group of A37, together with TsaE and TsaB. TsaD likely plays a direct catalytic role in this reaction. The sequence is that of tRNA N6-adenosine threonylcarbamoyltransferase from Neisseria meningitidis serogroup C / serotype 2a (strain ATCC 700532 / DSM 15464 / FAM18).